The sequence spans 274 residues: Syntaxin-12 (274 aa).

2 disordered regions span residues 1 to 20 and 128 to 147; these read MSYG…PQPR and EKES…EDRQ. At S2 the chain carries N-acetylserine. At 2-250 the chain is on the cytoplasmic side; the sequence is SYGPLDMYRN…AYYQKKSRKK (249 aa). Positions 33 to 130 form a coiled coil; it reads IQRISQATAQ…QRKVSEKEKE (98 aa). 4 positions are modified to phosphoserine: S139, S142, S218, and S225. In terms of domain architecture, t-SNARE coiled-coil homology spans 178–240; sequence LELIKERETA…ERATDQLQRA (63 aa). A helical; Anchor for type IV membrane protein transmembrane segment spans residues 251 to 271; the sequence is MCILVLVLSVIVTVLVVVIWV. Residues 272 to 274 lie on the Vesicular side of the membrane; it reads ASK.

This sequence belongs to the syntaxin family. In terms of assembly, associates with the BLOC-1 complex. Interacts with BLOC1S6. Interacts with NAPA and SNAP23. Identified in a complex containing STX6, STX12, VAMP4 and VTI1A. Interacts with GRIPAP1. Forms a complex with GRIP1, GRIA2 and NSG1; controls the intracellular fate of AMPAR and the endosomal sorting of the GRIA2 subunit toward recycling and membrane targeting. Interacts with NSG1. Interacts with TPC1. Interacts (via N-terminus) with VPS13B.

It localises to the endosome membrane. The protein resides in the golgi apparatus membrane. The protein localises to the endomembrane system. It is found in the early endosome membrane. Its subcellular location is the recycling endosome membrane. Its function is as follows. SNARE promoting fusion of transport vesicles with target membranes. Together with SNARE STX6, promotes movement of vesicles from endosomes to the cell membrane, and may therefore function in the endocytic recycling pathway. Through complex formation with GRIP1, GRIA2 and NSG1 controls the intracellular fate of AMPAR and the endosomal sorting of the GRIA2 subunit toward recycling and membrane targeting. In Mus musculus (Mouse), this protein is Syntaxin-12 (Stx12).